A 344-amino-acid chain; its full sequence is Centromere protein N (344 aa).

This sequence belongs to the CENP-N/CHL4 family.

It localises to the nucleus. The protein localises to the chromosome. Its subcellular location is the centromere. Probable component of a centromeric complex involved in assembly of kinetochore proteins, mitotic progression and chromosome segregation. The polypeptide is Centromere protein N (CENPN) (Gallus gallus (Chicken)).